We begin with the raw amino-acid sequence, 106 residues long: ATP-dependent Clp protease adapter protein ClpS (106 aa).

Belongs to the ClpS family. Binds to the N-terminal domain of the chaperone ClpA.

Functionally, involved in the modulation of the specificity of the ClpAP-mediated ATP-dependent protein degradation. The polypeptide is ATP-dependent Clp protease adapter protein ClpS (Salmonella agona (strain SL483)).